A 356-amino-acid chain; its full sequence is Heparan sulfate 2-O-sulfotransferase 1 (356 aa).

The Cytoplasmic portion of the chain corresponds to M1 to K11. A helical; Signal-anchor for type II membrane protein transmembrane segment spans residues L12 to E28. Residues M24–R51 are a coiled coil. The Lumenal portion of the chain corresponds to N29 to N356. Adenosine 3',5'-bisphosphate-binding residues include K83, T84, A85, S86, T87, and S88. Residues N108 and N127 are each glycosylated (N-linked (GlcNAc...) asparagine). Catalysis depends on residues H140 and H142. Adenosine 3',5'-bisphosphate contacts are provided by R164 and S172. 2 disulfide bridges follow: C201–C209 and C222–C228. Adenosine 3',5'-bisphosphate-binding residues include Y279, S285, T290, and K293.

Belongs to the sulfotransferase 3 family. As to quaternary structure, homotrimer. Interacts with the C5-epimerase GLCE. N-glycosylated.

Its subcellular location is the golgi apparatus membrane. Catalyzes the transfer of a sulfo group from 3'-phospho-5'-adenylyl sulfate (PAPS) to the 2-OH position of iduronic acid (IdoA) or glucuronic acid (GlcA) within the heparan sulfate (HS) chain and participates in HS biosynthesis. Required for metanephric development of kidney formation, suggesting that 2-O-sulfation within HS is essential for signaling between ureteric bud and metanephric mesenchyme. This chain is Heparan sulfate 2-O-sulfotransferase 1, found in Pongo abelii (Sumatran orangutan).